Reading from the N-terminus, the 450-residue chain is Phosphoglucosamine mutase (450 aa).

The active-site Phosphoserine intermediate is S102. Mg(2+) is bound by residues S102, D243, D245, and D247. Residue S102 is modified to Phosphoserine.

It belongs to the phosphohexose mutase family. It depends on Mg(2+) as a cofactor. Post-translationally, activated by phosphorylation.

It carries out the reaction alpha-D-glucosamine 1-phosphate = D-glucosamine 6-phosphate. Catalyzes the conversion of glucosamine-6-phosphate to glucosamine-1-phosphate. In Rhizobium meliloti (strain 1021) (Ensifer meliloti), this protein is Phosphoglucosamine mutase.